Reading from the N-terminus, the 218-residue chain is Ribose-5-phosphate isomerase A (218 aa).

Residues 28–31 (TGST), 81–84 (DGAD), and 94–97 (KGGG) each bind substrate. Glu103 serves as the catalytic Proton acceptor. Residue Lys121 coordinates substrate.

Belongs to the ribose 5-phosphate isomerase family. As to quaternary structure, homodimer.

The catalysed reaction is aldehydo-D-ribose 5-phosphate = D-ribulose 5-phosphate. It functions in the pathway carbohydrate degradation; pentose phosphate pathway; D-ribose 5-phosphate from D-ribulose 5-phosphate (non-oxidative stage): step 1/1. Functionally, catalyzes the reversible conversion of ribose-5-phosphate to ribulose 5-phosphate. The sequence is that of Ribose-5-phosphate isomerase A from Thioalkalivibrio sulfidiphilus (strain HL-EbGR7).